A 90-amino-acid polypeptide reads, in one-letter code: Probable Fe(2+)-trafficking protein (90 aa).

It belongs to the Fe(2+)-trafficking protein family.

In terms of biological role, could be a mediator in iron transactions between iron acquisition and iron-requiring processes, such as synthesis and/or repair of Fe-S clusters in biosynthetic enzymes. This is Probable Fe(2+)-trafficking protein from Polaromonas sp. (strain JS666 / ATCC BAA-500).